A 423-amino-acid chain; its full sequence is Glucose-1-phosphate adenylyltransferase (423 aa).

Residues Tyr107, Gly172, 187-188 (EK), and Ser205 contribute to the alpha-D-glucose 1-phosphate site.

It belongs to the bacterial/plant glucose-1-phosphate adenylyltransferase family. In terms of assembly, homotetramer.

The enzyme catalyses alpha-D-glucose 1-phosphate + ATP + H(+) = ADP-alpha-D-glucose + diphosphate. It functions in the pathway glycan biosynthesis; glycogen biosynthesis. Its function is as follows. Involved in the biosynthesis of ADP-glucose, a building block required for the elongation reactions to produce glycogen. Catalyzes the reaction between ATP and alpha-D-glucose 1-phosphate (G1P) to produce pyrophosphate and ADP-Glc. This is Glucose-1-phosphate adenylyltransferase from Cereibacter sphaeroides (strain ATCC 17029 / ATH 2.4.9) (Rhodobacter sphaeroides).